A 309-amino-acid chain; its full sequence is tRNA uridine(34) hydroxylase (309 aa).

Residues 130 to 224 (SDPDTIVIDT…YLEEVPQEES (95 aa)) enclose the Rhodanese domain. Cys184 (cysteine persulfide intermediate) is an active-site residue.

Belongs to the TrhO family.

The catalysed reaction is uridine(34) in tRNA + AH2 + O2 = 5-hydroxyuridine(34) in tRNA + A + H2O. Its function is as follows. Catalyzes oxygen-dependent 5-hydroxyuridine (ho5U) modification at position 34 in tRNAs. The protein is tRNA uridine(34) hydroxylase of Rhizobium etli (strain ATCC 51251 / DSM 11541 / JCM 21823 / NBRC 15573 / CFN 42).